Here is a 173-residue protein sequence, read N- to C-terminus: Bifunctional protein PyrR (173 aa).

A PRPP-binding motif is present at residues 93–105; it reads VILIDDVLYTGRT.

This sequence belongs to the purine/pyrimidine phosphoribosyltransferase family. PyrR subfamily. As to quaternary structure, homodimer and homohexamer; in equilibrium.

The enzyme catalyses UMP + diphosphate = 5-phospho-alpha-D-ribose 1-diphosphate + uracil. In terms of biological role, regulates transcriptional attenuation of the pyrimidine nucleotide (pyr) operon by binding in a uridine-dependent manner to specific sites on pyr mRNA. This disrupts an antiterminator hairpin in the RNA and favors formation of a downstream transcription terminator, leading to a reduced expression of downstream genes. Functionally, also displays a weak uracil phosphoribosyltransferase activity which is not physiologically significant. This is Bifunctional protein PyrR from Streptococcus pyogenes serotype M49 (strain NZ131).